We begin with the raw amino-acid sequence, 388 residues long: Carbamoyl phosphate synthase small chain (388 aa).

Residues 1–192 (MPLSDAMPAL…FNPDGTVKNG (192 aa)) form a CPSase region. Residues serine 51, glycine 244, and glycine 246 each coordinate L-glutamine. The region spanning 196 to 382 (TVVALDFGVK…VHQMRTTKQA (187 aa)) is the Glutamine amidotransferase type-1 domain. Cysteine 272 serves as the catalytic Nucleophile. Residues methionine 273, glutamine 276, asparagine 312, and phenylalanine 315 each coordinate L-glutamine. Catalysis depends on residues histidine 355 and glutamate 357.

Belongs to the CarA family. In terms of assembly, composed of two chains; the small (or glutamine) chain promotes the hydrolysis of glutamine to ammonia, which is used by the large (or ammonia) chain to synthesize carbamoyl phosphate. Tetramer of heterodimers (alpha,beta)4.

It carries out the reaction hydrogencarbonate + L-glutamine + 2 ATP + H2O = carbamoyl phosphate + L-glutamate + 2 ADP + phosphate + 2 H(+). The catalysed reaction is L-glutamine + H2O = L-glutamate + NH4(+). Its pathway is amino-acid biosynthesis; L-arginine biosynthesis; carbamoyl phosphate from bicarbonate: step 1/1. It functions in the pathway pyrimidine metabolism; UMP biosynthesis via de novo pathway; (S)-dihydroorotate from bicarbonate: step 1/3. Small subunit of the glutamine-dependent carbamoyl phosphate synthetase (CPSase). CPSase catalyzes the formation of carbamoyl phosphate from the ammonia moiety of glutamine, carbonate, and phosphate donated by ATP, constituting the first step of 2 biosynthetic pathways, one leading to arginine and/or urea and the other to pyrimidine nucleotides. The small subunit (glutamine amidotransferase) binds and cleaves glutamine to supply the large subunit with the substrate ammonia. This Nostoc sp. (strain PCC 7120 / SAG 25.82 / UTEX 2576) protein is Carbamoyl phosphate synthase small chain.